A 130-amino-acid polypeptide reads, in one-letter code: Ribonuclease P protein component (130 aa).

Belongs to the RnpA family. Consists of a catalytic RNA component (M1 or rnpB) and a protein subunit.

It carries out the reaction Endonucleolytic cleavage of RNA, removing 5'-extranucleotides from tRNA precursor.. Its function is as follows. RNaseP catalyzes the removal of the 5'-leader sequence from pre-tRNA to produce the mature 5'-terminus. It can also cleave other RNA substrates such as 4.5S RNA. The protein component plays an auxiliary but essential role in vivo by binding to the 5'-leader sequence and broadening the substrate specificity of the ribozyme. The sequence is that of Ribonuclease P protein component from Desulfovibrio desulfuricans (strain ATCC 27774 / DSM 6949 / MB).